The sequence spans 112 residues: Large ribosomal subunit protein mL53 (112 aa).

This sequence belongs to the mitochondrion-specific ribosomal protein mL53 family. In terms of assembly, component of the mitochondrial ribosome large subunit (39S) which comprises a 16S rRNA and about 50 distinct proteins.

It is found in the mitochondrion. In Pongo abelii (Sumatran orangutan), this protein is Large ribosomal subunit protein mL53 (MRPL53).